We begin with the raw amino-acid sequence, 204 residues long: Probable nicotinate-nucleotide adenylyltransferase (204 aa).

Belongs to the NadD family.

The enzyme catalyses nicotinate beta-D-ribonucleotide + ATP + H(+) = deamido-NAD(+) + diphosphate. The protein operates within cofactor biosynthesis; NAD(+) biosynthesis; deamido-NAD(+) from nicotinate D-ribonucleotide: step 1/1. In terms of biological role, catalyzes the reversible adenylation of nicotinate mononucleotide (NaMN) to nicotinic acid adenine dinucleotide (NaAD). This Mycobacterium sp. (strain JLS) protein is Probable nicotinate-nucleotide adenylyltransferase.